The primary structure comprises 365 residues: Transmembrane protein 25 (365 aa).

The signal sequence occupies residues 1-26 (MELPLSQATLRHTLLLLPALLSSGQG). Topologically, residues 27 to 232 (ELAPQIDGQT…APGLLATRIE (206 aa)) are extracellular. The Ig-like domain occupies 30–123 (PQIDGQTWAE…SGRPANASVI (94 aa)). Cysteines 52 and 107 form a disulfide. 4 N-linked (GlcNAc...) asparagine glycosylation sites follow: N106, N162, N192, and N205. The helical transmembrane segment at 233–253 (VPLLGIVVAGGLALGTLVGFS) threads the bilayer. The Cytoplasmic portion of the chain corresponds to 254–365 (TLVACLVCRK…SSVSSDEIWL (112 aa)).

In terms of assembly, interacts with GRIN2B. Expressed throughout the brain with higher levels within the hippocampus.

It is found in the late endosome. The protein resides in the lysosome. It localises to the cell membrane. The protein localises to the secreted. Functionally, in neurons, modulates the degradation of NMDA receptor GRIN2B subunit. Plays a role in the regulation of neuronal excitability. This is Transmembrane protein 25 from Mus musculus (Mouse).